Reading from the N-terminus, the 235-residue chain is Glial cell line-derived neurotrophic factor (235 aa).

The N-terminal stretch at 1-19 (MKLWDILATCLLLLSSVST) is a signal peptide. Positions 20–87 (RPLFHKLQPS…DFIEATLGRL (68 aa)) are excised as a propeptide. 2 disordered regions span residues 34 to 60 (VRSESPALDPIIDSQPETSNPKQASME) and 91 to 137 (SDVE…RVKG). Residues 119–128 (GERKRSRGRA) are compositionally biased toward basic residues. 3 disulfide bridges follow: C142–C203, C169–C232, and C173–C234. N150 and N186 each carry an N-linked (GlcNAc...) asparagine glycan.

The protein belongs to the TGF-beta family. GDNF subfamily. As to quaternary structure, homodimer; disulfide-linked. Interacts with GFRA1 coreceptor and RET: forms a 2:2:2 ternary complex composed of GDNF ligand, GFRA1 and RET receptor. In terms of tissue distribution, first expressed at 14 hours post-fertilization (hpf) in the ventral half of anterior somites and in intermediate mesoderm. Ventral somitic expression persists and extends more posteriorly over the next 12 hours. Expressed throughout the ventral trunk mesoderm and endoderm at 24 hpf. By 30 hpf, somitic expression ceases and by 36 hpf, expression becomes restricted to the endodermal cells forming the gut, with expression along the whole length of the developing gut tube at 72 hpf.

Its subcellular location is the secreted. Functionally, neurotrophic factor that enhances survival and morphological differentiation of dopaminergic neurons and increases their high-affinity dopamine uptake. Acts by binding to its coreceptor, GFRA1, leading to autophosphorylation and activation of the RET receptor. This is Glial cell line-derived neurotrophic factor from Danio rerio (Zebrafish).